Reading from the N-terminus, the 436-residue chain is Trigger factor (436 aa).

Positions 163 to 248 constitute a PPIase FKBP-type domain; sequence GDRVVLDFAG…VKEVAEGVLP (86 aa).

Belongs to the FKBP-type PPIase family. Tig subfamily.

The protein localises to the cytoplasm. The enzyme catalyses [protein]-peptidylproline (omega=180) = [protein]-peptidylproline (omega=0). Involved in protein export. Acts as a chaperone by maintaining the newly synthesized protein in an open conformation. Functions as a peptidyl-prolyl cis-trans isomerase. The protein is Trigger factor of Bordetella parapertussis (strain 12822 / ATCC BAA-587 / NCTC 13253).